A 37-amino-acid chain; its full sequence is Ferredoxin--NADP reductase, chloroplastic (37 aa).

NADP(+)-binding positions include serine 3 and 24–25 (SR).

It belongs to the ferredoxin--NADP reductase type 1 family. FAD is required as a cofactor.

It is found in the plastid. It localises to the chloroplast stroma. The protein resides in the chloroplast thylakoid membrane. The enzyme catalyses 2 reduced [2Fe-2S]-[ferredoxin] + NADP(+) + H(+) = 2 oxidized [2Fe-2S]-[ferredoxin] + NADPH. The protein operates within energy metabolism; photosynthesis. Functionally, may play a key role in regulating the relative amounts of cyclic and non-cyclic electron flow to meet the demands of the plant for ATP and reducing power. This is Ferredoxin--NADP reductase, chloroplastic from Imperata cylindrica (Cogon grass).